A 1355-amino-acid polypeptide reads, in one-letter code: Probable major glycoprotein (1355 aa).

An N-terminal signal peptide occupies residues 1–16 (MKKTMLAIILIPLVYA). Residues asparagine 81, asparagine 112, asparagine 129, asparagine 169, asparagine 173, asparagine 192, asparagine 542, asparagine 655, asparagine 682, asparagine 744, asparagine 780, asparagine 811, asparagine 815, asparagine 860, asparagine 865, asparagine 882, asparagine 895, asparagine 1213, asparagine 1225, asparagine 1267, and asparagine 1274 are each glycosylated (N-linked (GlcNAc...) asparagine; by host). A coiled-coil region spans residues 1245–1299 (QIVSMEMEIQDLKLELIQLQKINTSVHMENITGDIDAMKATIEEYRAEMAKLRVT). The helical transmembrane segment at 1308 to 1328 (FIYAILGVIAIGALIAIIFMA) threads the bilayer.

Its subcellular location is the host membrane. This Ictaluridae (bullhead catfishes) protein is Probable major glycoprotein (ORF46).